The following is a 329-amino-acid chain: 4-diphosphocytidyl-2-C-methyl-D-erythritol kinase (329 aa).

Lys-14 is a catalytic residue. 117–127 (PSGAGMGGASS) serves as a coordination point for ATP. Asp-166 is a catalytic residue.

Belongs to the GHMP kinase family. IspE subfamily.

It carries out the reaction 4-CDP-2-C-methyl-D-erythritol + ATP = 4-CDP-2-C-methyl-D-erythritol 2-phosphate + ADP + H(+). It functions in the pathway isoprenoid biosynthesis; isopentenyl diphosphate biosynthesis via DXP pathway; isopentenyl diphosphate from 1-deoxy-D-xylulose 5-phosphate: step 3/6. Catalyzes the phosphorylation of the position 2 hydroxy group of 4-diphosphocytidyl-2C-methyl-D-erythritol. The polypeptide is 4-diphosphocytidyl-2-C-methyl-D-erythritol kinase (Rhodopirellula baltica (strain DSM 10527 / NCIMB 13988 / SH1)).